Here is a 367-residue protein sequence, read N- to C-terminus: Female-specific protein transformer (367 aa).

Residues 86–280 (ESISSKKIKS…HRHHRSQERS (195 aa)) are disordered. The segment covering 109 to 129 (VKQNSPDVTQKFTKKYGSSEN) has biased composition (polar residues). The segment covering 130–144 (PDFRRHSSYEKDNYH) has biased composition (basic and acidic residues). The span at 195–223 (NRRRSSHRSRRGSGSPRSRRYTSRHRRRS) shows a compositional bias: basic residues. Over residues 229–238 (TSWKHNPEHR) the composition is skewed to basic and acidic residues. The span at 239-257 (TSRRSRTRSPRGNRSRRRS) shows a compositional bias: basic residues.

In terms of biological role, sex differentiation protein controlling female somatic sexual differentiation. May act by promoting the formation of a splicing enhancer complex. The chain is Female-specific protein transformer from Musca domestica (House fly).